The primary structure comprises 181 residues: UPF0397 protein STER_0346 (181 aa).

Helical transmembrane passes span 11–31 (ATGI…IPIF), 45–65 (LFSV…GHAL), 72–92 (GNIS…IGLF), 109–129 (IWFN…VTPI), and 147–167 (FVAG…LLAI).

Belongs to the UPF0397 family.

The protein resides in the cell membrane. In Streptococcus thermophilus (strain ATCC BAA-491 / LMD-9), this protein is UPF0397 protein STER_0346.